The sequence spans 78 residues: UPF0270 protein YPO0179/y3960/YP_0178 (78 aa).

The protein belongs to the UPF0270 family.

This is UPF0270 protein YPO0179/y3960/YP_0178 from Yersinia pestis.